Reading from the N-terminus, the 115-residue chain is Ribonuclease P protein component (115 aa).

This sequence belongs to the RnpA family. In terms of assembly, consists of a catalytic RNA component (M1 or rnpB) and a protein subunit.

It carries out the reaction Endonucleolytic cleavage of RNA, removing 5'-extranucleotides from tRNA precursor.. RNaseP catalyzes the removal of the 5'-leader sequence from pre-tRNA to produce the mature 5'-terminus. It can also cleave other RNA substrates such as 4.5S RNA. The protein component plays an auxiliary but essential role in vivo by binding to the 5'-leader sequence and broadening the substrate specificity of the ribozyme. This Bacillus cereus (strain G9842) protein is Ribonuclease P protein component.